We begin with the raw amino-acid sequence, 392 residues long: D-amino-acid oxidase 2 (392 aa).

Residues S10, I13, R33, D34, A45, S46, G50, and N52 each contribute to the FAD site. F56, Y245, Y262, and R311 together coordinate anthranilate. The (R)-lactate site is built by Y245, Y262, and R311. FAD-binding residues include R311, G361, S362, G364, and Q366. S362 contributes to the anthranilate binding site. Position 362 (S362) interacts with (R)-lactate. Positions 390-392 (AKL) match the Microbody targeting signal motif.

This sequence belongs to the DAMOX/DASOX family. Requires FAD as cofactor.

The protein localises to the peroxisome matrix. It carries out the reaction a D-alpha-amino acid + O2 + H2O = a 2-oxocarboxylate + H2O2 + NH4(+). It catalyses the reaction D-methionine + O2 + H2O = 4-methylsulfanyl-2-oxobutanoate + H2O2 + NH4(+). The enzyme catalyses D-serine + O2 + H2O = 3-hydroxypyruvate + H2O2 + NH4(+). The catalysed reaction is D-histidine + O2 + H2O = 3-(imidazol-5-yl)pyruvate + H2O2 + NH4(+). It carries out the reaction D-proline + O2 = 1-pyrroline-2-carboxylate + H2O2. It catalyses the reaction D-alanine + O2 + H2O = pyruvate + H2O2 + NH4(+). The enzyme catalyses D-leucine + O2 + H2O = 4-methyl-2-oxopentanoate + H2O2 + NH4(+). The catalysed reaction is D-valine + O2 + H2O = 3-methyl-2-oxobutanoate + H2O2 + NH4(+). In terms of biological role, catalyzes the oxidative deamination of D-amino acids with broad substrate specificity. Enables the organism to utilize D-amino acids as a source of nutrients. Enables the organism to utilize D-alanine, D-cysteine, D-histidine, D-leucine, D-methionine, D-phenylalanine, D-proline, D-serine, D-threonine, D-aspartate and D-valine as a nitrogen source and may also contribute to utlization of D-tryptophan, D-tyrosine and D-asparagine as a nitrogen source. Protects the organism from the toxicity of D-amino acids, including from D-alanine. May play a role in its interaction with the host. This Cryptococcus deuterogattii (strain R265) (Cryptococcus gattii VGII (strain R265)) protein is D-amino-acid oxidase 2.